The primary structure comprises 398 residues: MKVLVINCGSSSLKYQLIDMTTEDALAEGLVERIGINGSILTQKVKGREKYIVEQPLKDHQDAIELVLKSLIDGNHGVIKSMDEISAVGHRVVHGGEKYSKSVLVNDEVMKNIEECIKLAPLHNPPNIIGIKACEELMPNTPMVCVFDTAFHQTMSEKAYMYPLPYEYYTEDHIRKYGFHGTSHKYVANKVAELMKKDASELKTVTCHLGNGVSITAVDGGKSIDTTMGFTPLAGTIMGSRCGDIDPAIVTYLIKEKGYSADEVNDILNKKSGILGVSGVGTDFRDIRSAIGENNKRAILATDIFGYQIKKQIGAYAVAMGGLDTIVFTAGIGEHAPEVRIRALTGLEFIGIELDEEKNNSHDIGEGLLISKESSKVKVYVIPTNEELMIAKETLALV.

Asn-7 is a binding site for Mg(2+). Lys-14 lines the ATP pocket. Arg-91 is a binding site for substrate. The active-site Proton donor/acceptor is the Asp-148. ATP contacts are provided by residues 208–212 (HLGNG), 283–285 (DFR), and 331–335 (GIGEH). A Mg(2+)-binding site is contributed by Glu-386.

The protein belongs to the acetokinase family. In terms of assembly, homodimer. Mg(2+) serves as cofactor. The cofactor is Mn(2+).

Its subcellular location is the cytoplasm. It catalyses the reaction acetate + ATP = acetyl phosphate + ADP. The protein operates within metabolic intermediate biosynthesis; acetyl-CoA biosynthesis; acetyl-CoA from acetate: step 1/2. Catalyzes the formation of acetyl phosphate from acetate and ATP. Can also catalyze the reverse reaction. The chain is Acetate kinase from Clostridium botulinum (strain Eklund 17B / Type B).